The following is a 372-amino-acid chain: Beta sliding clamp (372 aa).

This sequence belongs to the beta sliding clamp family. Forms a ring-shaped head-to-tail homodimer around DNA which binds and tethers DNA polymerases and other proteins to the DNA. The DNA replisome complex has a single clamp-loading complex (3 tau and 1 each of delta, delta', psi and chi subunits) which binds 3 Pol III cores (1 core on the leading strand and 2 on the lagging strand) each with a beta sliding clamp dimer. Additional proteins in the replisome are other copies of gamma, psi and chi, Ssb, DNA helicase and RNA primase.

Its subcellular location is the cytoplasm. Confers DNA tethering and processivity to DNA polymerases and other proteins. Acts as a clamp, forming a ring around DNA (a reaction catalyzed by the clamp-loading complex) which diffuses in an ATP-independent manner freely and bidirectionally along dsDNA. Initially characterized for its ability to contact the catalytic subunit of DNA polymerase III (Pol III), a complex, multichain enzyme responsible for most of the replicative synthesis in bacteria; Pol III exhibits 3'-5' exonuclease proofreading activity. The beta chain is required for initiation of replication as well as for processivity of DNA replication. This is Beta sliding clamp (dnaN) from Caulobacter vibrioides (strain ATCC 19089 / CIP 103742 / CB 15) (Caulobacter crescentus).